The following is a 516-amino-acid chain: Exodeoxyribonuclease 7 large subunit (516 aa).

The protein belongs to the XseA family. As to quaternary structure, heterooligomer composed of large and small subunits.

Its subcellular location is the cytoplasm. The enzyme catalyses Exonucleolytic cleavage in either 5'- to 3'- or 3'- to 5'-direction to yield nucleoside 5'-phosphates.. In terms of biological role, bidirectionally degrades single-stranded DNA into large acid-insoluble oligonucleotides, which are then degraded further into small acid-soluble oligonucleotides. The protein is Exodeoxyribonuclease 7 large subunit of Chlamydia trachomatis serovar L2 (strain ATCC VR-902B / DSM 19102 / 434/Bu).